A 574-amino-acid chain; its full sequence is DNA polymerase I (574 aa).

Residues 4–161 (EYVTGEEGLK…ELFPKMRDML (158 aa)) form the 3'-5' exonuclease domain.

It belongs to the DNA polymerase type-A family.

The enzyme catalyses DNA(n) + a 2'-deoxyribonucleoside 5'-triphosphate = DNA(n+1) + diphosphate. This chain is DNA polymerase I (polA), found in Aquifex aeolicus (strain VF5).